We begin with the raw amino-acid sequence, 288 residues long: MIKDIKNKFSKLMSSVTKTSSDLKTKRNDFKEDFDDSNIFEIRDLNFYYENGKKQALYDVNLDIKKNKVTSFIGPSGCGKSTFLRLLNRMNELLPNTTFDGDIYFEKQNIYSKKFSVLDLRIKVGMVFQKATPFPMSIYDNVAFALKNQGIKNKKILDETIEKSLRSAALWDEVKDNLNDIATDLSGGQQQRLCIARAIACKPSVLLMDEPTSALDPIATSKIEELIMELKEKYTIIIVTHSMAQAQRISDETVFFFQGKIIENGPTKNIFLKPKEKKTRDYINGRIG.

One can recognise an ABC transporter domain in the interval 42 to 283 (IRDLNFYYEN…PKEKKTRDYI (242 aa)). Position 74 to 81 (74 to 81 (GPSGCGKS)) interacts with ATP.

Belongs to the ABC transporter superfamily. Phosphate importer (TC 3.A.1.7) family. The complex is composed of two ATP-binding proteins (PstB), two transmembrane proteins (PstC and PstA) and a solute-binding protein (PstS).

The protein localises to the cell membrane. The enzyme catalyses phosphate(out) + ATP + H2O = ADP + 2 phosphate(in) + H(+). In terms of biological role, part of the ABC transporter complex PstSACB involved in phosphate import. Responsible for energy coupling to the transport system. The chain is Phosphate import ATP-binding protein PstB from Malacoplasma penetrans (strain HF-2) (Mycoplasma penetrans).